Reading from the N-terminus, the 186-residue chain is Casparian strip membrane protein 1 (186 aa).

At 1–26 the chain is on the cytoplasmic side; sequence MKSSPAELISEAKSSTQNSKMKRAVS. Residues 27-47 traverse the membrane as a helical segment; the sequence is VLDFILRLIAVVATLASAIAM. The Extracellular portion of the chain corresponds to 48–74; the sequence is GTTDESLPFFTQFIRFRAEYDDLPTLR. Residues 75–95 traverse the membrane as a helical segment; the sequence is LFVVASAFASGYLILSLPLSI. Topologically, residues 96–107 are cytoplasmic; sequence LHITRSSARRTR. Residues 108 to 128 traverse the membrane as a helical segment; that stretch reads VILIILDMVMLTSLTAASSAA. Over 129–161 the chain is Extracellular; that stretch reads AAIVYLAHKGNAKANWFAFCQQYDSFCERISGS. Residues 162–182 form a helical membrane-spanning segment; that stretch reads LIGSFIAIPLFIMLILFSALV. Residues 183–186 are Cytoplasmic-facing; sequence LSKR.

The protein belongs to the Casparian strip membrane proteins (CASP) family. As to quaternary structure, homodimer and heterodimers.

It localises to the cell membrane. In terms of biological role, regulates membrane-cell wall junctions and localized cell wall deposition. Required for establishment of the Casparian strip membrane domain (CSD) and the subsequent formation of Casparian strips, a cell wall modification of the root endodermis that determines an apoplastic barrier between the intraorganismal apoplasm and the extraorganismal apoplasm and prevents lateral diffusion. The polypeptide is Casparian strip membrane protein 1 (Lotus japonicus (Lotus corniculatus var. japonicus)).